A 215-amino-acid chain; its full sequence is 3-demethoxyubiquinol 3-hydroxylase (215 aa).

Residues E64, E94, H97, E146, E178, and H181 each contribute to the Fe cation site.

This sequence belongs to the COQ7 family. Fe cation serves as cofactor.

The protein localises to the cell membrane. It catalyses the reaction a 5-methoxy-2-methyl-3-(all-trans-polyprenyl)benzene-1,4-diol + AH2 + O2 = a 3-demethylubiquinol + A + H2O. Its pathway is cofactor biosynthesis; ubiquinone biosynthesis. Its function is as follows. Catalyzes the hydroxylation of 2-nonaprenyl-3-methyl-6-methoxy-1,4-benzoquinol during ubiquinone biosynthesis. This is 3-demethoxyubiquinol 3-hydroxylase from Pseudomonas fluorescens (strain SBW25).